We begin with the raw amino-acid sequence, 359 residues long: tRNA-specific 2-thiouridylase MnmA (359 aa).

ATP-binding positions include Gly11–Ser18 and Ile37. The active-site Nucleophile is Cys99. Cys99 and Cys195 are disulfide-bonded. Residue Gly123 coordinates ATP. The segment at Lys145–Gln147 is interaction with tRNA. The Cysteine persulfide intermediate role is filled by Cys195. Residues Arg304–Tyr305 are interaction with tRNA.

It belongs to the MnmA/TRMU family.

The protein resides in the cytoplasm. The catalysed reaction is S-sulfanyl-L-cysteinyl-[protein] + uridine(34) in tRNA + AH2 + ATP = 2-thiouridine(34) in tRNA + L-cysteinyl-[protein] + A + AMP + diphosphate + H(+). Catalyzes the 2-thiolation of uridine at the wobble position (U34) of tRNA, leading to the formation of s(2)U34. This is tRNA-specific 2-thiouridylase MnmA from Chlorobium phaeobacteroides (strain BS1).